The primary structure comprises 250 residues: Triosephosphate isomerase (250 aa).

A substrate-binding site is contributed by 9–11 (NWK). The active-site Electrophile is H100. Catalysis depends on E169, which acts as the Proton acceptor. Substrate is bound by residues G175, S208, and 229 to 230 (GG).

It belongs to the triosephosphate isomerase family. Homodimer.

The protein localises to the cytoplasm. The catalysed reaction is D-glyceraldehyde 3-phosphate = dihydroxyacetone phosphate. Its pathway is carbohydrate biosynthesis; gluconeogenesis. It participates in carbohydrate degradation; glycolysis; D-glyceraldehyde 3-phosphate from glycerone phosphate: step 1/1. Functionally, involved in the gluconeogenesis. Catalyzes stereospecifically the conversion of dihydroxyacetone phosphate (DHAP) to D-glyceraldehyde-3-phosphate (G3P). This is Triosephosphate isomerase from Synechococcus sp. (strain JA-2-3B'a(2-13)) (Cyanobacteria bacterium Yellowstone B-Prime).